Here is a 321-residue protein sequence, read N- to C-terminus: tRNA pseudouridine synthase B (321 aa).

Asp47 functions as the Nucleophile in the catalytic mechanism.

Belongs to the pseudouridine synthase TruB family. Type 1 subfamily.

It catalyses the reaction uridine(55) in tRNA = pseudouridine(55) in tRNA. Its function is as follows. Responsible for synthesis of pseudouridine from uracil-55 in the psi GC loop of transfer RNAs. This is tRNA pseudouridine synthase B from Shewanella baltica (strain OS185).